The primary structure comprises 239 residues: Bradykinin-potentiating and C-type natriuretic peptides (239 aa).

The first 23 residues, 1–23, serve as a signal peptide directing secretion; it reads MFVSRLAASGLLLLALLAVSLDG. Propeptides lie at residues 24–33 and 43–49; these read KPVQQWSHKG and LVVQQWS. Pyrrolidone carboxylic acid is present on Q50. The propeptide occupies 62–64; the sequence is VVV. A Pyrrolidone carboxylic acid modification is found at Q65. A propeptide spanning residues 76–82 is cleaved from the precursor; the sequence is LVVQQWS. Q83 bears the Pyrrolidone carboxylic acid mark. Positions 95 to 97 are excised as a propeptide; sequence LVV. Q98 carries the post-translational modification Pyrrolidone carboxylic acid. Propeptides lie at residues 109–136 and 148–217; these read LLKP…AALD and GSKA…LAKK. A disordered region spans residues 132–205; it reads EAALDTPPAG…HHAVGGGGGG (74 aa). Positions 161-171 are enriched in low complexity; it reads SKGASATSAAS. Basic and acidic residues predominate over residues 173 to 183; sequence PMRDLRTDGKQ. C223 and C239 form a disulfide bridge.

It in the N-terminal section; belongs to the bradykinin-potentiating peptide family. In the central section; belongs to the bradykinin inhibitor peptide family. This sequence in the C-terminal section; belongs to the natriuretic peptide family. Expressed by the venom gland.

It is found in the secreted. Functionally, bradykinin-potentiating peptides both inhibit the activity of the angiotensin-converting enzyme (ACE) and enhances the action of bradykinin by inhibiting the peptidases that inactivate it. They act as indirect hypotensive agent. Inhibits angiotensin-converting enzyme (ACE) activity (IC(50)=4.25 uM), preventing the release of angiotensin and thus indirectly contributing to hypotension. In vivo, induce hypotensive response in both normotensive and hypertensive rats. In terms of biological role, antagonizes the vasodilatory actions of bradykinin at the B2 bradykinin receptor (BDKRB2). Its function is as follows. has a vasorelaxant activity in rat aortic strips and a diuretic potency in anesthetized rats. May act by activating natriuretic receptors (NPR1 and/or NPR2). This is Bradykinin-potentiating and C-type natriuretic peptides from Lachesis muta muta (Bushmaster).